A 145-amino-acid chain; its full sequence is Large ribosomal subunit protein uL15 (145 aa).

Residues 1–13 (MNLHELKYNEGAR) show a composition bias toward basic and acidic residues. Positions 1-56 (MNLHELKYNEGARKEKHRVGRGHAAGKGKQAGKGQSGQLKRTGSKPGFEGGQNPWY) are disordered. Basic residues predominate over residues 14-26 (KEKHRVGRGHAAG).

This sequence belongs to the universal ribosomal protein uL15 family. In terms of assembly, part of the 50S ribosomal subunit.

Binds to the 23S rRNA. This Mycoplasma mobile (strain ATCC 43663 / 163K / NCTC 11711) (Mesomycoplasma mobile) protein is Large ribosomal subunit protein uL15.